A 391-amino-acid polypeptide reads, in one-letter code: 8-amino-7-oxononanoate synthase (391 aa).

Arginine 19 contacts substrate. Residue 106-107 (GY) participates in pyridoxal 5'-phosphate binding. A substrate-binding site is contributed by histidine 131. Residues serine 178, histidine 206, and threonine 234 each coordinate pyridoxal 5'-phosphate. Lysine 237 is subject to N6-(pyridoxal phosphate)lysine. Position 353 (threonine 353) interacts with substrate.

This sequence belongs to the class-II pyridoxal-phosphate-dependent aminotransferase family. BioF subfamily. Homodimer. Requires pyridoxal 5'-phosphate as cofactor.

It carries out the reaction 6-carboxyhexanoyl-[ACP] + L-alanine + H(+) = (8S)-8-amino-7-oxononanoate + holo-[ACP] + CO2. It participates in cofactor biosynthesis; biotin biosynthesis. Catalyzes the decarboxylative condensation of pimeloyl-[acyl-carrier protein] and L-alanine to produce 8-amino-7-oxononanoate (AON), [acyl-carrier protein], and carbon dioxide. The sequence is that of 8-amino-7-oxononanoate synthase from Geobacter sulfurreducens (strain ATCC 51573 / DSM 12127 / PCA).